The sequence spans 92 residues: uncharacterized protein (92 aa).

Functionally, homolog of shope fibroma virus T4A ORF. This is an uncharacterized protein from Swinepox virus (strain Kasza) (SWPV).